Reading from the N-terminus, the 317-residue chain is Probable cell division protein WhiA (317 aa).

Positions 275-308 (SLKELGEMLVPKVGKSGVNHRMRKIDELAEKLEE) form a DNA-binding region, H-T-H motif.

This sequence belongs to the WhiA family.

Functionally, involved in cell division and chromosome segregation. This chain is Probable cell division protein WhiA, found in Desulfitobacterium hafniense (strain DSM 10664 / DCB-2).